Consider the following 607-residue polypeptide: Threonine--tRNA ligase (607 aa).

Residues D200 to P502 form a catalytic region. The Zn(2+) site is built by C299, H350, and H479.

The protein belongs to the class-II aminoacyl-tRNA synthetase family. As to quaternary structure, homodimer. Zn(2+) is required as a cofactor.

It is found in the cytoplasm. The catalysed reaction is tRNA(Thr) + L-threonine + ATP = L-threonyl-tRNA(Thr) + AMP + diphosphate + H(+). In terms of biological role, catalyzes the attachment of threonine to tRNA(Thr) in a two-step reaction: L-threonine is first activated by ATP to form Thr-AMP and then transferred to the acceptor end of tRNA(Thr). Also edits incorrectly charged L-seryl-tRNA(Thr). The chain is Threonine--tRNA ligase from Synechococcus sp. (strain ATCC 27144 / PCC 6301 / SAUG 1402/1) (Anacystis nidulans).